A 186-amino-acid polypeptide reads, in one-letter code: ATP synthase subunit delta (186 aa).

Belongs to the ATPase delta chain family. In terms of assembly, F-type ATPases have 2 components, F(1) - the catalytic core - and F(0) - the membrane proton channel. F(1) has five subunits: alpha(3), beta(3), gamma(1), delta(1), epsilon(1). CF(0) has four main subunits: a(1), b(1), b'(1) and c(10-14). The alpha and beta chains form an alternating ring which encloses part of the gamma chain. F(1) is attached to F(0) by a central stalk formed by the gamma and epsilon chains, while a peripheral stalk is formed by the delta, b and b' chains.

It localises to the cell inner membrane. F(1)F(0) ATP synthase produces ATP from ADP in the presence of a proton or sodium gradient. F-type ATPases consist of two structural domains, F(1) containing the extramembraneous catalytic core and F(0) containing the membrane proton channel, linked together by a central stalk and a peripheral stalk. During catalysis, ATP synthesis in the catalytic domain of F(1) is coupled via a rotary mechanism of the central stalk subunits to proton translocation. Its function is as follows. This protein is part of the stalk that links CF(0) to CF(1). It either transmits conformational changes from CF(0) to CF(1) or is implicated in proton conduction. The chain is ATP synthase subunit delta from Dinoroseobacter shibae (strain DSM 16493 / NCIMB 14021 / DFL 12).